A 206-amino-acid chain; its full sequence is Ribosomal RNA small subunit methyltransferase G (206 aa).

Residues glycine 71, phenylalanine 76, 122 to 123, and arginine 135 contribute to the S-adenosyl-L-methionine site; that span reads AE.

Belongs to the methyltransferase superfamily. RNA methyltransferase RsmG family.

The protein localises to the cytoplasm. Functionally, specifically methylates the N7 position of a guanine in 16S rRNA. The chain is Ribosomal RNA small subunit methyltransferase G from Bacteroides thetaiotaomicron (strain ATCC 29148 / DSM 2079 / JCM 5827 / CCUG 10774 / NCTC 10582 / VPI-5482 / E50).